Reading from the N-terminus, the 481-residue chain is Amino acid permease 6 (481 aa).

Over 1–36 the chain is Cytoplasmic; that stretch reads MEKKKSMFVEQSFPEHEIGDTNKNFDEDGRDKRTGT. Helical transmembrane passes span 37–57 and 58–78; these read WMTG…LSLA and WAIA…FSFI. The Cytoplasmic portion of the chain corresponds to 79–125; the sequence is TYFTSTMLADCYRSPDPVTGKRNYTYMEVVRSYLGGRKVQLCGLAQY. Residues 126–146 form a helical membrane-spanning segment; the sequence is GNLIGITIGYTITASISMVAV. Residues 147–167 are Extracellular-facing; that stretch reads KRSNCFHKNGHNVKCATSNTP. The chain crosses the membrane as a helical span at residues 168–188; that stretch reads FMIIFAIIQIILSQIPNFHNL. The Cytoplasmic segment spans residues 189–190; that stretch reads SW. The chain crosses the membrane as a helical span at residues 191-211; the sequence is LSILAAVMSFCYASIGVGLSI. At 212–242 the chain is on the extracellular side; the sequence is AKAAGGGEHVRTTLTGVTVGIDVSGAEKIWR. Residues 243–263 form a helical membrane-spanning segment; that stretch reads TFQAIGDIAFAYAYSTVLIEI. Residues 264–283 are Cytoplasmic-facing; it reads QDTLKAGPPSENKAMKRASL. Residues 284–304 traverse the membrane as a helical segment; it reads VGVSTTTFFYMLCGCVGYAAF. Residues 305-321 are Extracellular-facing; it reads GNDAPGNFLTGFGFYEP. Residues 322 to 342 form a helical membrane-spanning segment; that stretch reads FWLIDFANVCIAVHLIGAYQV. The Cytoplasmic portion of the chain corresponds to 343–385; that stretch reads FCQPIFQFVESQSAKRWPDNKFITGEYKIHVPCCGDFSINFLR. Residues 386 to 405 form a helical membrane-spanning segment; sequence LVWRTSYVVVTAVVAMIFPF. Over 406–408 the chain is Extracellular; it reads FND. The helical transmembrane segment at 409–427 threads the bilayer; the sequence is FLGLIGAASFWPLTVYFPI. Residues 428-447 are Cytoplasmic-facing; that stretch reads EMHIAQKKIPKFSFTWTWLK. Residues 448–468 form a helical membrane-spanning segment; that stretch reads ILSWTCFIVSLVAAAGSVQGL. Topologically, residues 469–481 are extracellular; that stretch reads IQSLKDFKPFQAP.

Belongs to the amino acid/polyamine transporter 2 family. Amino acid/auxin permease (AAAP) (TC 2.A.18.2) subfamily. Expressed in roots and leaves, and at lower levels in stems and flowers. Found in the xylem parenchyma.

The protein resides in the cell membrane. Functionally, amino acid-proton symporter. Stereospecific transporter with a broad specificity for tryptophan, proline, and neutral and acidic amino acids. Has an affinity for aspartate in a physiological range. Involved in the uptake of amino acids diffusing out of the xylem tracheids into the xylem parenchyma. This Arabidopsis thaliana (Mouse-ear cress) protein is Amino acid permease 6 (AAP6).